Reading from the N-terminus, the 648-residue chain is Leucine aminopeptidase 2 (648 aa).

Residues 143-145 and 269-274 each bind a peptide; these read QCQ and PYGGME. Zn(2+) is bound at residue histidine 298. Glutamate 299 acts as the Proton acceptor in catalysis. Positions 302 and 321 each coordinate Zn(2+). Tyrosine 408 functions as the Proton donor in the catalytic mechanism.

The protein belongs to the peptidase M1 family. Zn(2+) serves as cofactor.

The protein resides in the cytoplasm. The protein localises to the nucleus. It carries out the reaction an epoxide + H2O = an ethanediol. Aminopeptidase that preferentially cleaves di- and tripeptides. Also has low epoxide hydrolase activity (in vitro). Can hydrolyze the epoxide leukotriene LTA(4) but it forms preferentially 5,6-dihydroxy-7,9,11,14-eicosatetraenoic acid rather than the cytokine leukotriene B(4) as the product compared to the homologous mammalian enzyme (in vitro). The sequence is that of Leucine aminopeptidase 2 from Lodderomyces elongisporus (strain ATCC 11503 / CBS 2605 / JCM 1781 / NBRC 1676 / NRRL YB-4239) (Yeast).